A 639-amino-acid polypeptide reads, in one-letter code: tRNA uridine 5-carboxymethylaminomethyl modification enzyme MnmG (639 aa).

FAD contacts are provided by residues 13–18 (GGGHAG), valine 125, and serine 180. Position 273 to 287 (273 to 287 (GPRYCPSIEDKVVRF)) interacts with NAD(+). Glutamine 370 is a binding site for FAD. Residues 620–639 (KRQGGNGPQSPRPDDGRARA) are disordered.

The protein belongs to the MnmG family. As to quaternary structure, homodimer. Heterotetramer of two MnmE and two MnmG subunits. FAD serves as cofactor.

The protein resides in the cytoplasm. NAD-binding protein involved in the addition of a carboxymethylaminomethyl (cmnm) group at the wobble position (U34) of certain tRNAs, forming tRNA-cmnm(5)s(2)U34. This chain is tRNA uridine 5-carboxymethylaminomethyl modification enzyme MnmG, found in Thioalkalivibrio sulfidiphilus (strain HL-EbGR7).